The primary structure comprises 373 residues: Anhydro-N-acetylmuramic acid kinase (373 aa).

12-19 (GTSLDGVD) provides a ligand contact to ATP.

The protein belongs to the anhydro-N-acetylmuramic acid kinase family.

It catalyses the reaction 1,6-anhydro-N-acetyl-beta-muramate + ATP + H2O = N-acetyl-D-muramate 6-phosphate + ADP + H(+). The protein operates within amino-sugar metabolism; 1,6-anhydro-N-acetylmuramate degradation. It functions in the pathway cell wall biogenesis; peptidoglycan recycling. Functionally, catalyzes the specific phosphorylation of 1,6-anhydro-N-acetylmuramic acid (anhMurNAc) with the simultaneous cleavage of the 1,6-anhydro ring, generating MurNAc-6-P. Is required for the utilization of anhMurNAc either imported from the medium or derived from its own cell wall murein, and thus plays a role in cell wall recycling. The protein is Anhydro-N-acetylmuramic acid kinase of Salmonella dublin (strain CT_02021853).